An 81-amino-acid polypeptide reads, in one-letter code: Photosystem I iron-sulfur center (81 aa).

4Fe-4S ferredoxin-type domains lie at 2-31 (SHAV…MVPW) and 39-68 (IASS…IRVY). [4Fe-4S] cluster is bound by residues cysteine 11, cysteine 14, cysteine 17, cysteine 21, cysteine 48, cysteine 51, cysteine 54, and cysteine 58.

In terms of assembly, the cyanobacterial PSI reaction center is composed of one copy each of PsaA,B,C,D,E,F,I,J,K,L,M and X, and forms trimeric complexes. It depends on [4Fe-4S] cluster as a cofactor.

The protein localises to the cellular thylakoid membrane. The catalysed reaction is reduced [plastocyanin] + hnu + oxidized [2Fe-2S]-[ferredoxin] = oxidized [plastocyanin] + reduced [2Fe-2S]-[ferredoxin]. Functionally, apoprotein for the two 4Fe-4S centers FA and FB of photosystem I (PSI); essential for photochemical activity. FB is the terminal electron acceptor of PSI, donating electrons to ferredoxin. The C-terminus interacts with PsaA/B/D and helps assemble the protein into the PSI complex. Required for binding of PsaD and PsaE to PSI. PSI is a plastocyanin/cytochrome c6-ferredoxin oxidoreductase, converting photonic excitation into a charge separation, which transfers an electron from the donor P700 chlorophyll pair to the spectroscopically characterized acceptors A0, A1, FX, FA and FB in turn. This chain is Photosystem I iron-sulfur center, found in Prochlorococcus marinus (strain NATL2A).